The primary structure comprises 99 residues: Bacterial microcompartment protein homohexamer (99 aa).

The BMC domain maps to 4-88 (ALGMIEVRGF…PHVNVDAALP (85 aa)).

It belongs to the bacterial microcompartments protein family. As to quaternary structure, homohexamer with a small central pore. When purified protein is examined by atomic force microscopy it dynamically makes uniform patches about 35 Angstroms thick with hexamers in the same orientation. In the BMC the concave side faces outward, with the N- and C-terminii exposed to the cytoplasm.

The protein resides in the bacterial microcompartment. In terms of biological role, the only hexameric shell protein in this bacterium, it forms the majority of the bacterial microcompartment (BMC) shell. Expression of 5 proteins in E.coli (BMC-H (Hoch_5815), BMC-P (Hoch_5814), and 3 BMC-T (Hoch_5812, Hoch_5816, Hoch_3341)) forms a 40 nm artificial BMC with a molecular mass of 6.5 MDa. There are 60 BMC-H hexamers per BMC. The shell facets are 20-30 Angstroms thick (a single hexamer layer), with 1 of BMC-T trimers protruding to the exterior. The chain is Bacterial microcompartment protein homohexamer from Haliangium ochraceum (strain DSM 14365 / JCM 11303 / SMP-2).